A 63-amino-acid polypeptide reads, in one-letter code: Large ribosomal subunit protein bL28 (63 aa).

The protein belongs to the bacterial ribosomal protein bL28 family.

The protein is Large ribosomal subunit protein bL28 of Citrifermentans bemidjiense (strain ATCC BAA-1014 / DSM 16622 / JCM 12645 / Bem) (Geobacter bemidjiensis).